The following is a 219-amino-acid chain: Orotate phosphoribosyltransferase (219 aa).

K26 contributes to the 5-phospho-alpha-D-ribose 1-diphosphate binding site. 34-35 (FF) serves as a coordination point for orotate. Residues 72–73 (YK), R98, K99, K102, H104, and 124–132 (DDVITAGTA) contribute to the 5-phospho-alpha-D-ribose 1-diphosphate site. Orotate is bound by residues T128 and R156.

Belongs to the purine/pyrimidine phosphoribosyltransferase family. PyrE subfamily. Homodimer. It depends on Mg(2+) as a cofactor.

It catalyses the reaction orotidine 5'-phosphate + diphosphate = orotate + 5-phospho-alpha-D-ribose 1-diphosphate. The protein operates within pyrimidine metabolism; UMP biosynthesis via de novo pathway; UMP from orotate: step 1/2. Catalyzes the transfer of a ribosyl phosphate group from 5-phosphoribose 1-diphosphate to orotate, leading to the formation of orotidine monophosphate (OMP). In Xylella fastidiosa (strain Temecula1 / ATCC 700964), this protein is Orotate phosphoribosyltransferase.